We begin with the raw amino-acid sequence, 322 residues long: MRKKPLTIFSDGTLTRRENTLYFESAKGRKPLAIEGIYDIYIYGHVNITSQALHYIAQKGILIHFFNHYGYYDGTFYPRETLLSGDLIIRQAEHYLNKEKRLFLAKSFVTGGTKNMERNLKNWGIKAKLSDYLDELNDARKITEIMNVEARIRQEYYAKWDENLPEEFKIVKRTRRPPKNEMNALISFLNSRLYATIITEIYNTQLAPTISYLHEPSERRFSLSLDLSEIFKPIIADRVANRLVKKGSLKKEHFREDLNGVLLTEEGMKIVTKAYNEELQKSVKHPKIGSNVTRQRLIRLEAYKLIKHLVGVEEYKPLVAWF.

Mn(2+) contacts are provided by E149, H214, and E229.

The protein belongs to the CRISPR-associated endonuclease Cas1 family. As to quaternary structure, homodimer, forms a heterotetramer with a Cas2 homodimer. Requires Mg(2+) as cofactor. Mn(2+) is required as a cofactor.

Its function is as follows. CRISPR (clustered regularly interspaced short palindromic repeat), is an adaptive immune system that provides protection against mobile genetic elements (viruses, transposable elements and conjugative plasmids). CRISPR clusters contain spacers, sequences complementary to antecedent mobile elements, and target invading nucleic acids. CRISPR clusters are transcribed and processed into CRISPR RNA (crRNA). Acts as a dsDNA endonuclease. Involved in the integration of spacer DNA into the CRISPR cassette. This is CRISPR-associated endonuclease Cas1 from Pyrococcus horikoshii (strain ATCC 700860 / DSM 12428 / JCM 9974 / NBRC 100139 / OT-3).